Reading from the N-terminus, the 439-residue chain is Putative myrosinase 3 (439 aa).

An N-terminal signal peptide occupies residues 1–19 (MKFRALGLVLLLAVETCKA). The N-linked (GlcNAc...) asparagine glycan is linked to Asn33. A beta-D-glucoside-binding positions include His145, 190 to 191 (NQ), and Tyr316. N-linked (GlcNAc...) asparagine glycosylation is present at Asn336. A beta-D-glucoside-binding residues include Glu386 and Trp404. Catalysis depends on Glu386, which acts as the Nucleophile.

It belongs to the glycosyl hydrolase 1 family. Expressed specifically in stamens and petals.

It carries out the reaction a thioglucoside + H2O = a sugar + a thiol.. This is Putative myrosinase 3 from Arabidopsis thaliana (Mouse-ear cress).